Here is a 1308-residue protein sequence, read N- to C-terminus: Cadherin-related family member 2 (1308 aa).

An N-terminal signal peptide occupies residues 1–20 (MAWLWLLCALLPAFMVSVTA). The Extracellular portion of the chain corresponds to 21-1152 (NSPPSFGVNM…EPDQQKLLTS (1132 aa)). Cadherin domains lie at 33-124 (VTLP…IPVF), 125-241 (LNTE…DPRF), 242-353 (IREF…KPEF), 368-480 (AQVN…RPVF), 481-586 (SQSL…PPVV), 586-695 (VRGS…LPVF), 695-807 (FNQS…PPTL), 809-927 (AASL…APYF), and 929-1051 (PNNQ…RLQF). The chain crosses the membrane as a helical span at residues 1153 to 1173 (VIIGLVVSLVLVLVILITALV). The Cytoplasmic portion of the chain corresponds to 1174-1308 (CLRKSYHRKL…TNPGLDTTDL (135 aa)). Positions 1178-1308 (SYHRKLRAMK…TNPGLDTTDL (131 aa)) are mediates interaction with USH1C and MYO7B and is required for proper localization to microvilli tips and function in microvilli organization. Ser-1245 is subject to Phosphoserine. The disordered stretch occupies residues 1251–1308 (VDLDMDSKEFKRKDLPGDPPEPDPEPLTAVLSGRSAGASEQQKKNLSFTNPGLDTTDL). Residues 1255-1266 (MDSKEFKRKDLP) are compositionally biased toward basic and acidic residues. The segment covering 1288–1308 (ASEQQKKNLSFTNPGLDTTDL) has biased composition (polar residues). Ser-1297 is subject to Phosphoserine.

Part of the IMAC/intermicrovillar adhesion complex/intermicrovillar tip-link complex composed of ANKS4B, MYO7B, USH1C, CDHR2 and CDHR5. Interacts with MAST2. Interacts (via cytoplasmic domain) with USH1C and MYO7B; required for proper localization of CDHR2 to microvilli tips and its function in brush border differentiation.

Its subcellular location is the apical cell membrane. The protein resides in the cell projection. The protein localises to the microvillus membrane. It localises to the cell junction. In terms of biological role, intermicrovillar adhesion molecule that forms, via its extracellular domain, calcium-dependent heterophilic complexes with CDHR5 on adjacent microvilli. Thereby, controls the packing of microvilli at the apical membrane of epithelial cells. Through its cytoplasmic domain, interacts with microvillus cytoplasmic proteins to form the intermicrovillar adhesion complex/IMAC. This complex plays a central role in microvilli and epithelial brush border differentiation. May also play a role in cell-cell adhesion and contact inhibition in epithelial cells. The polypeptide is Cadherin-related family member 2 (Mus musculus (Mouse)).